The chain runs to 590 residues: Aspartate--tRNA(Asp/Asn) ligase (590 aa).

Residue Glu175 participates in L-aspartate binding. The tract at residues 199-202 is aspartate; sequence QQFK. L-aspartate-binding residues include Arg221 and His452. An ATP-binding site is contributed by 221–223; the sequence is RDE. Residue Glu485 participates in ATP binding. L-aspartate is bound at residue Arg492. 537 to 540 provides a ligand contact to ATP; that stretch reads GIDR.

It belongs to the class-II aminoacyl-tRNA synthetase family. Type 1 subfamily. Homodimer.

The protein localises to the cytoplasm. The enzyme catalyses tRNA(Asx) + L-aspartate + ATP = L-aspartyl-tRNA(Asx) + AMP + diphosphate. Aspartyl-tRNA synthetase with relaxed tRNA specificity since it is able to aspartylate not only its cognate tRNA(Asp) but also tRNA(Asn). Reaction proceeds in two steps: L-aspartate is first activated by ATP to form Asp-AMP and then transferred to the acceptor end of tRNA(Asp/Asn). This is Aspartate--tRNA(Asp/Asn) ligase from Dinoroseobacter shibae (strain DSM 16493 / NCIMB 14021 / DFL 12).